Reading from the N-terminus, the 109-residue chain is Beta-keratin-related protein (109 aa).

Serine 2 carries the N-acetylserine modification.

The protein belongs to the avian keratin family.

The polypeptide is Beta-keratin-related protein (BKJ) (Coturnix japonica (Japanese quail)).